We begin with the raw amino-acid sequence, 132 residues long: MTLNLCVLTPNRIVWDSEVKEIILPTNSGQIGVLPNHAPIATAVDIGILRIRLNGQWLTMALMGGFAKIGSNEIIVLVNDAEKGSDIDPQEAQQTLEIAEANLKKAEGKRQTIEANLALRRARTRVEAINAV.

The protein belongs to the ATPase epsilon chain family. F-type ATPases have 2 components, CF(1) - the catalytic core - and CF(0) - the membrane proton channel. CF(1) has five subunits: alpha(3), beta(3), gamma(1), delta(1), epsilon(1). CF(0) has three main subunits: a, b and c.

It localises to the plastid. It is found in the chloroplast thylakoid membrane. Produces ATP from ADP in the presence of a proton gradient across the membrane. In Coffea arabica (Arabian coffee), this protein is ATP synthase epsilon chain, chloroplastic.